The primary structure comprises 409 residues: Single Ig IL-1-related receptor (409 aa).

At 1-117 (MAGVCDMAPN…TLWRAGPAGH (117 aa)) the chain is on the extracellular side. The 100-residue stretch at 9–108 (PNFLSPSEDQ…VWNVSSHSFT (100 aa)) folds into the Ig-like C2-type domain. Residues N31, N58, N73, N85, and N101 are each glycosylated (N-linked (GlcNAc...) asparagine). A disulfide bridge connects residues C32 and C97. Residues 118 to 138 (VAAVLASLLVLVVLLLVALLY) traverse the membrane as a helical; Signal-anchor for type III membrane protein segment. At 139 to 409 (VKCRLNMLLW…FYCLVSEDDV (271 aa)) the chain is on the cytoplasmic side. The 145-residue stretch at 162–306 (KLYDAYVSYS…DFWKELQLAL (145 aa)) folds into the TIR domain. Position 382 is a phosphoserine (S382).

This sequence belongs to the interleukin-1 receptor family. In terms of assembly, interacts with IL1R1, IRAK1, TLR4, TLR5, TLR9 and TRAF6. Upon IL-1 stimulation found in a complex at least composed of IL1R1, SIGIRR, MYD88, IRAK1 and TRAF6. Upon stimulation with LPC found in a complex at least composed of TLR4, SIG1IR, MYD88, IRAK1 and TRAF6. Interacts with PALM3. As to expression, expressed at high levels in kidney, and at moderate levels in colon, small intestine, lung, spleen and liver. Not expressed in brain and muscle. Expressed at high levels in epithelial cells, at moderate levels in splenocytes, and at low or undetectable levels in fibroblasts or endothelial cells. Expressed in mucosal and dendritic cells.

Its subcellular location is the membrane. Functionally, acts as a negative regulator of the Toll-like and IL-1R receptor signaling pathways. Attenuates the recruitment of receptor-proximal signaling components to the TLR4 receptor, probably through an TIR-TIR domain interaction with TLR4. Through its extracellular domain interferes with the heterodimerization of Il1R1 and IL1RAP. In Mus musculus (Mouse), this protein is Single Ig IL-1-related receptor (Sigirr).